The sequence spans 571 residues: Proline--tRNA ligase (571 aa).

This sequence belongs to the class-II aminoacyl-tRNA synthetase family. ProS type 1 subfamily. Homodimer.

The protein resides in the cytoplasm. The enzyme catalyses tRNA(Pro) + L-proline + ATP = L-prolyl-tRNA(Pro) + AMP + diphosphate. Catalyzes the attachment of proline to tRNA(Pro) in a two-step reaction: proline is first activated by ATP to form Pro-AMP and then transferred to the acceptor end of tRNA(Pro). As ProRS can inadvertently accommodate and process non-cognate amino acids such as alanine and cysteine, to avoid such errors it has two additional distinct editing activities against alanine. One activity is designated as 'pretransfer' editing and involves the tRNA(Pro)-independent hydrolysis of activated Ala-AMP. The other activity is designated 'posttransfer' editing and involves deacylation of mischarged Ala-tRNA(Pro). The misacylated Cys-tRNA(Pro) is not edited by ProRS. The protein is Proline--tRNA ligase of Histophilus somni (strain 2336) (Haemophilus somnus).